The following is a 177-amino-acid chain: Ferritin heavy chain, oocyte isoform (177 aa).

Positions 7-156 (QNFHQECEAA…DHITNLRRMG (150 aa)) constitute a Ferritin-like diiron domain. 5 residues coordinate Fe cation: Glu24, Glu59, His62, Glu104, and Gln138.

Belongs to the ferritin family. As to quaternary structure, oligomer of 24 subunits. There are two types of subunits: L (light) chain and H (heavy) chain. The functional molecule is roughly spherical and contains a central cavity into which the insoluble mineral iron core is deposited.

Its subcellular location is the cytoplasm. The catalysed reaction is 4 Fe(2+) + O2 + 4 H(+) = 4 Fe(3+) + 2 H2O. In terms of biological role, stores iron in a soluble, non-toxic, readily available form. Important for iron homeostasis. Has ferroxidase activity. Iron is taken up in the ferrous form and deposited as ferric hydroxides after oxidation. The polypeptide is Ferritin heavy chain, oocyte isoform (Xenopus laevis (African clawed frog)).